Here is a 395-residue protein sequence, read N- to C-terminus: Synaptotagmin-8 (395 aa).

The Extracellular segment spans residues 1–44 (MQADRSMKMGHVSNPLSTSAPVDATAGPNLIPDLITKIPWPRWI). A helical; Signal-anchor for type III membrane protein transmembrane segment spans residues 45–65 (LFIAILAAGVLLVSCLLCVIC). Over 66–395 (YCCHRQRHRK…PRLPLLRPRS (330 aa)) the chain is Cytoplasmic. C2 domains are found at residues 113–229 (PWGQ…ESWY) and 241–370 (QMGE…AQWH).

The protein belongs to the synaptotagmin family. In terms of assembly, homodimer or homooligomer. Homodimerization and homooligomerization do not depend on Ca(2+). Interacts with SYNCRIP isoform 2 C-terminus. Binds inositol 1,3,4,5-tetrakisphosphate (IP4). Binds to AP2 in a Ca(2+)-independent manner. Interacts with STX1A, STX1B and STX2; the interaction is Ca(2+)-dependent. In terms of tissue distribution, ubiquitous. Strongly expressed in heart, kidney, cerebral cortex, pancreas, and many insulin-secreting cells; lower expression in spleen. Broadly distributed in kidney.

The protein resides in the cell membrane. It is found in the cytoplasmic vesicle. The protein localises to the secretory vesicle. Its subcellular location is the acrosome. Its function is as follows. Involved in the trafficking and exocytosis of secretory vesicles in non-neuronal tissues. Mediates Ca(2+)-regulation of exocytosis acrosomal reaction in sperm. May mediate Ca(2+)-regulation of exocytosis in insulin secreted cells. This Rattus norvegicus (Rat) protein is Synaptotagmin-8 (Syt8).